The primary structure comprises 121 residues: Protein TCL1B5 (121 aa).

Belongs to the TCL1 family.

The polypeptide is Protein TCL1B5 (Tcl1b5) (Mus musculus (Mouse)).